The following is a 274-amino-acid chain: Thymidylate synthase (274 aa).

DUMP is bound at residue Arg21. Residue His51 participates in (6R)-5,10-methylene-5,6,7,8-tetrahydrofolate binding. 123 to 124 (RR) contacts dUMP. The Nucleophile role is filled by Cys156. DUMP-binding positions include 176–179 (RSAD), Asn187, and 217–219 (HIY). Asp179 is a (6R)-5,10-methylene-5,6,7,8-tetrahydrofolate binding site. Residue Ser273 participates in (6R)-5,10-methylene-5,6,7,8-tetrahydrofolate binding.

It belongs to the thymidylate synthase family. Bacterial-type ThyA subfamily. Homodimer.

Its subcellular location is the cytoplasm. It carries out the reaction dUMP + (6R)-5,10-methylene-5,6,7,8-tetrahydrofolate = 7,8-dihydrofolate + dTMP. Its pathway is pyrimidine metabolism; dTTP biosynthesis. Catalyzes the reductive methylation of 2'-deoxyuridine-5'-monophosphate (dUMP) to 2'-deoxythymidine-5'-monophosphate (dTMP) while utilizing 5,10-methylenetetrahydrofolate (mTHF) as the methyl donor and reductant in the reaction, yielding dihydrofolate (DHF) as a by-product. This enzymatic reaction provides an intracellular de novo source of dTMP, an essential precursor for DNA biosynthesis. The sequence is that of Thymidylate synthase from Francisella philomiragia subsp. philomiragia (strain ATCC 25017 / CCUG 19701 / FSC 153 / O#319-036).